Reading from the N-terminus, the 518-residue chain is Serine--tRNA ligase, mitochondrial (518 aa).

The N-terminal 34 residues, Met1 to Phe34, are a transit peptide targeting the mitochondrion. Lys110 carries the N6-acetyllysine modification. Position 195 is an N6-succinyllysine (Lys195). Residue Thr299 to Glu301 participates in L-serine binding. Arg330–Glu332 contacts ATP. Lys337 carries the post-translational modification N6-succinyllysine. Position 345 (Val345) interacts with ATP. An L-serine-binding site is contributed by Glu352. Glu418–Ser421 lines the ATP pocket. Thr453 serves as a coordination point for L-serine. Positions Pro497–Ser518 are disordered.

The protein belongs to the class-II aminoacyl-tRNA synthetase family. Type-1 seryl-tRNA synthetase subfamily. Homodimer. The tRNA molecule probably binds across the dimer. Post-translationally, two N-termini starting at positions 35 and 37 have been identified by direct sequencing.

Its subcellular location is the mitochondrion matrix. The enzyme catalyses tRNA(Ser) + L-serine + ATP = L-seryl-tRNA(Ser) + AMP + diphosphate + H(+). It catalyses the reaction tRNA(Sec) + L-serine + ATP = L-seryl-tRNA(Sec) + AMP + diphosphate + H(+). It participates in aminoacyl-tRNA biosynthesis; selenocysteinyl-tRNA(Sec) biosynthesis; L-seryl-tRNA(Sec) from L-serine and tRNA(Sec): step 1/1. Catalyzes the attachment of serine to tRNA(Ser). Is also probably able to aminoacylate tRNA(Sec) with serine, to form the misacylated tRNA L-seryl-tRNA(Sec), which will be further converted into selenocysteinyl-tRNA(Sec). In Bos taurus (Bovine), this protein is Serine--tRNA ligase, mitochondrial (SARS2).